Consider the following 270-residue polypeptide: Phosphatidylglycerol--prolipoprotein diacylglyceryl transferase (270 aa).

Helical transmembrane passes span 14–34, 60–80, 103–123, 133–153, 181–201, 209–229, and 235–255; these read VAFT…ILAL, YFFW…IAIY, FVGI…LATI, LWQL…FGRI, PSQL…LFFY, GELI…CEFF, and GIGF…LMFF. Residue R152 coordinates a 1,2-diacyl-sn-glycero-3-phospho-(1'-sn-glycerol).

Belongs to the Lgt family.

The protein localises to the cell inner membrane. The enzyme catalyses L-cysteinyl-[prolipoprotein] + a 1,2-diacyl-sn-glycero-3-phospho-(1'-sn-glycerol) = an S-1,2-diacyl-sn-glyceryl-L-cysteinyl-[prolipoprotein] + sn-glycerol 1-phosphate + H(+). The protein operates within protein modification; lipoprotein biosynthesis (diacylglyceryl transfer). In terms of biological role, catalyzes the transfer of the diacylglyceryl group from phosphatidylglycerol to the sulfhydryl group of the N-terminal cysteine of a prolipoprotein, the first step in the formation of mature lipoproteins. This chain is Phosphatidylglycerol--prolipoprotein diacylglyceryl transferase, found in Campylobacter curvus (strain 525.92).